Reading from the N-terminus, the 353-residue chain is Photosystem II protein D1 (353 aa).

The residue at position 2 (threonine 2) is an N-acetylthreonine. A Phosphothreonine modification is found at threonine 2. 3 consecutive transmembrane segments (helical) span residues 29–46 (YIGW…TATS), 118–133 (HFLL…EWEL), and 142–156 (WIAV…AATA). Histidine 118 provides a ligand contact to chlorophyll a. A pheophytin a-binding site is contributed by tyrosine 126. Residues aspartate 170 and glutamate 189 each contribute to the [CaMn4O5] cluster site. The chain crosses the membrane as a helical span at residues 197–218 (FHMLGVAGVFGGSLFSAMHGSL). Position 198 (histidine 198) interacts with chlorophyll a. Residues histidine 215 and 264–265 (SF) contribute to the a quinone site. Histidine 215 serves as a coordination point for Fe cation. Histidine 272 provides a ligand contact to Fe cation. A helical transmembrane segment spans residues 274–288 (FLAAWPVVGIWFTAL). [CaMn4O5] cluster contacts are provided by histidine 332, glutamate 333, aspartate 342, and alanine 344. Residues 345 to 353 (SVELDSIDG) constitute a propeptide that is removed on maturation.

The protein belongs to the reaction center PufL/M/PsbA/D family. As to quaternary structure, PSII is composed of 1 copy each of membrane proteins PsbA, PsbB, PsbC, PsbD, PsbE, PsbF, PsbH, PsbI, PsbJ, PsbK, PsbL, PsbM, PsbT, PsbX, PsbY, PsbZ, Psb30/Ycf12, at least 3 peripheral proteins of the oxygen-evolving complex and a large number of cofactors. It forms dimeric complexes. It depends on The D1/D2 heterodimer binds P680, chlorophylls that are the primary electron donor of PSII, and subsequent electron acceptors. It shares a non-heme iron and each subunit binds pheophytin, quinone, additional chlorophylls, carotenoids and lipids. D1 provides most of the ligands for the Mn4-Ca-O5 cluster of the oxygen-evolving complex (OEC). There is also a Cl(-1) ion associated with D1 and D2, which is required for oxygen evolution. The PSII complex binds additional chlorophylls, carotenoids and specific lipids. as a cofactor. Post-translationally, tyr-161 forms a radical intermediate that is referred to as redox-active TyrZ, YZ or Y-Z. In terms of processing, C-terminally processed by CTPA; processing is essential to allow assembly of the oxygen-evolving complex and thus photosynthetic growth.

The protein resides in the plastid. Its subcellular location is the chloroplast thylakoid membrane. The catalysed reaction is 2 a plastoquinone + 4 hnu + 2 H2O = 2 a plastoquinol + O2. Photosystem II (PSII) is a light-driven water:plastoquinone oxidoreductase that uses light energy to abstract electrons from H(2)O, generating O(2) and a proton gradient subsequently used for ATP formation. It consists of a core antenna complex that captures photons, and an electron transfer chain that converts photonic excitation into a charge separation. The D1/D2 (PsbA/PsbD) reaction center heterodimer binds P680, the primary electron donor of PSII as well as several subsequent electron acceptors. The polypeptide is Photosystem II protein D1 (Gnetum parvifolium (Small-leaved jointfir)).